Reading from the N-terminus, the 1314-residue chain is E3 ubiquitin-protein ligase RNF123 (1314 aa).

Alanine 2 bears the N-acetylalanine mark. One can recognise a B30.2/SPRY domain in the interval 74–254 (VDSEDEESQG…VAFNFGSRPL (181 aa)). The disordered stretch occupies residues 460 to 481 (HRSSREGKDSAEDRAEAAEERP). The segment covering 462-481 (SSREGKDSAEDRAEAAEERP) has biased composition (basic and acidic residues). At serine 675 the chain carries Phosphoserine. Position 683 is an asymmetric dimethylarginine (arginine 683). The interaction with NFKB1 stretch occupies residues 968–974 (WILVRLW). Positions 1254, 1257, 1269, 1271, 1274, 1277, 1288, and 1291 each coordinate Zn(2+). An RING-type zinc finger spans residues 1254-1292 (CPICYAHPISAVFQPCGHKSCKACIDQHLMNNKDCFFCK).

In terms of assembly, component of the KPC complex composed of RNF123/KPC1 and UBAC1/KPC2. Interacts with UBAC1 and CDKN1B via its N-terminal domain. Interacts with RIGI (via N-terminus) and IFIH1 (via N-terminus). Ubiquitinated, leading to its degradation. Deubiquitinated by USP19, thereby stimulating CDKN1B ubiquitin-dependent degradation.

It is found in the cytoplasm. The enzyme catalyses S-ubiquitinyl-[E2 ubiquitin-conjugating enzyme]-L-cysteine + [acceptor protein]-L-lysine = [E2 ubiquitin-conjugating enzyme]-L-cysteine + N(6)-ubiquitinyl-[acceptor protein]-L-lysine.. Its pathway is protein modification; protein ubiquitination. Functionally, catalytic subunit of the KPC complex that acts as E3 ubiquitin-protein ligase. Promotes the ubiquitination and proteasome-mediated degradation of CDKN1B which is the cyclin-dependent kinase inhibitor at the G0-G1 transition of the cell cycle. Also acts as a key regulator of the NF-kappa-B signaling by promoting maturation of the NFKB1 component of NF-kappa-B. Acts by catalyzing ubiquitination of the NFKB1 p105 precursor, leading to limited proteasomal degradation of NFKB1 p105 and generation of the active NFKB1 p50 subunit. Functions also as an inhibitor of innate antiviral signaling mediated by RIGI and IFIH1 independently of its E3 ligase activity. Interacts with the N-terminal CARD domains of RIGI and IFIH1 and competes with the downstream adapter MAVS. This Oryctolagus cuniculus (Rabbit) protein is E3 ubiquitin-protein ligase RNF123.